We begin with the raw amino-acid sequence, 140 residues long: Ribosome-binding factor A (140 aa).

A disordered region spans residues 116 to 140 (RERQERGEIPPGSDDAQNCHDDEPS).

The protein belongs to the RbfA family. Monomer. Binds 30S ribosomal subunits, but not 50S ribosomal subunits or 70S ribosomes.

Its subcellular location is the cytoplasm. Its function is as follows. One of several proteins that assist in the late maturation steps of the functional core of the 30S ribosomal subunit. Associates with free 30S ribosomal subunits (but not with 30S subunits that are part of 70S ribosomes or polysomes). Required for efficient processing of 16S rRNA. May interact with the 5'-terminal helix region of 16S rRNA. This Synechococcus sp. (strain WH7803) protein is Ribosome-binding factor A.